A 469-amino-acid polypeptide reads, in one-letter code: NADH-quinone oxidoreductase subunit N (469 aa).

Helical transmembrane passes span 9–29 (PLLMASEMMMFGAGLVALIAG), 40–60 (VGVMAAAAQVGVIGVAVVQMV), 76–96 (ATGVARIACAAGLLLIWAVAG), 105–125 (EAETYALLMFSATGVLVLAGA), 128–148 (LLLLVAGYFLASIPLYGLVGL), 162–182 (YLMGALFGILLMLGVTILYGL), 201–221 (VAVAAGVVGVLAGLMFEAGGV), 234–254 (ANATAATFLTTVPKIGALVAL), 265–285 (LAWPVLIAVFAVISMTLGNLA), 294–316 (RLLGWSTVSQVGYLLVPITVAGA), 327–347 (YLGGYTVTNIAAFAVTAALPG), 365–385 (AAALVVALLGLVGTPPTAVFI), 402–422 (LAVVVFVNTLVSLFYYLRWII), and 448–468 (VLAAALSLLLGIIAGPVWQLV).

The protein belongs to the complex I subunit 2 family. NDH-1 is composed of 14 different subunits. Subunits NuoA, H, J, K, L, M, N constitute the membrane sector of the complex.

It localises to the cell membrane. It carries out the reaction a quinone + NADH + 5 H(+)(in) = a quinol + NAD(+) + 4 H(+)(out). Functionally, NDH-1 shuttles electrons from NADH, via FMN and iron-sulfur (Fe-S) centers, to quinones in the respiratory chain. The immediate electron acceptor for the enzyme in this species is believed to be a menaquinone. Couples the redox reaction to proton translocation (for every two electrons transferred, four hydrogen ions are translocated across the cytoplasmic membrane), and thus conserves the redox energy in a proton gradient. The protein is NADH-quinone oxidoreductase subunit N of Mycobacterium sp. (strain JLS).